The chain runs to 590 residues: Aspartate--tRNA(Asp/Asn) ligase (590 aa).

L-aspartate is bound at residue Glu-173. The aspartate stretch occupies residues 197-200 (QIFK). Position 219 (Arg-219) interacts with L-aspartate. Residues 219–221 (RDE) and Gln-228 each bind ATP. His-450 contributes to the L-aspartate binding site. Glu-484 lines the ATP pocket. Residue Arg-491 coordinates L-aspartate. 536-539 (GLDR) is a binding site for ATP.

This sequence belongs to the class-II aminoacyl-tRNA synthetase family. Type 1 subfamily. Homodimer.

The protein localises to the cytoplasm. The enzyme catalyses tRNA(Asx) + L-aspartate + ATP = L-aspartyl-tRNA(Asx) + AMP + diphosphate. Aspartyl-tRNA synthetase with relaxed tRNA specificity since it is able to aspartylate not only its cognate tRNA(Asp) but also tRNA(Asn). Reaction proceeds in two steps: L-aspartate is first activated by ATP to form Asp-AMP and then transferred to the acceptor end of tRNA(Asp/Asn). The polypeptide is Aspartate--tRNA(Asp/Asn) ligase (Coxiella burnetii (strain RSA 493 / Nine Mile phase I)).